A 433-amino-acid polypeptide reads, in one-letter code: Arabinooligosaccharide-binding protein (433 aa).

An N-terminal signal peptide occupies residues 1 to 21; it reads MKKMTVCFLVLMMLLTLVIAG. The N-palmitoyl cysteine moiety is linked to residue cysteine 22. Cysteine 22 is lipidated: S-diacylglycerol cysteine.

This sequence belongs to the bacterial solute-binding protein 1 family. In terms of assembly, the complex is composed of two ATP-binding proteins (MsmX), two transmembrane proteins (AraP and AraQ) and a solute-binding protein (AraN).

The protein resides in the cell membrane. Its function is as follows. Part of the ABC transporter complex AraNPQ involved in the uptake of arabinooligosaccharides. Transports alpha-1,5-arabinooligosaccharides, at least up to four L-arabinosyl units. AraN captures the substrate and delivers it to the two transmembrane components. This Bacillus subtilis (strain 168) protein is Arabinooligosaccharide-binding protein.